A 351-amino-acid polypeptide reads, in one-letter code: Protein-glutamate methylesterase/protein-glutamine glutaminase 1 (351 aa).

The 115-residue stretch at 1-115 folds into the Response regulatory domain; sequence MVDDSAVVRQ…KQFLTESADE (115 aa). At aspartate 49 the chain carries 4-aspartylphosphate. The region spanning 161-351 is the CheB-type methylesterase domain; the sequence is AQTTERIVAI…MAREIVTQLQ (191 aa). Residues serine 173, histidine 199, and aspartate 295 contribute to the active site.

The protein belongs to the CheB family. Phosphorylated by CheA. Phosphorylation of the N-terminal regulatory domain activates the methylesterase activity.

It localises to the cytoplasm. It carries out the reaction [protein]-L-glutamate 5-O-methyl ester + H2O = L-glutamyl-[protein] + methanol + H(+). The enzyme catalyses L-glutaminyl-[protein] + H2O = L-glutamyl-[protein] + NH4(+). Involved in chemotaxis. Part of a chemotaxis signal transduction system that modulates chemotaxis in response to various stimuli. Catalyzes the demethylation of specific methylglutamate residues introduced into the chemoreceptors (methyl-accepting chemotaxis proteins or MCP) by CheR. Also mediates the irreversible deamidation of specific glutamine residues to glutamic acid. This is Protein-glutamate methylesterase/protein-glutamine glutaminase 1 from Xanthomonas oryzae pv. oryzae (strain MAFF 311018).